The chain runs to 498 residues: MSNDSSDNQIRRRHHPVLPKGSFQKKDDSIVLEQELSTPKQVNQARPKFPSPITPTLPEMHLPVGNSKFQAVLPSLISPTLPPGFGMASDDSEASLAENDLHPLDNDSTRTSKTLKNSSEVLTASKLTDEGNSKPLLEEGEVAVSSPILLDSKDVIMGVTKSSKNLVEDAHKSKKASTNSSINNMVSTVNSENSNVNNGSSLNGNTSSNLKRKANVTLGDYKRLKVKNKNPSSQELITADVDKTSGSLSEKSEVNHASLKKTYMRLLNSGKMQKKECDKKGKFFEAYAVDAVLCYTVAFHLQNLSNLSRNHPATTSNWRTLPAYIQFLIKEEDKLDPCIQGLFFLLLGIAFREIFHIEVMRIRHSQLNLMRDIKESSSGLTSAKSLGDAQNLCENAVRLYSSYKHYITSMKKGSSLLTIEYISSTAPNTFNEFFVQKKANIPLPLDIDAPIGVTIRFSHNLLNEWIKKQGDVFESKLLKEDIENLQSLEESYPIAQYL.

3 disordered regions span residues 1–48 (MSND…ARPK), 99–134 (NDLH…GNSK), and 190–209 (NSEN…TSSN). Positions 35–44 (ELSTPKQVNQ) are enriched in polar residues. The span at 99-110 (NDLHPLDNDSTR) shows a compositional bias: basic and acidic residues. Residues 111-126 (TSKTLKNSSEVLTASK) are compositionally biased toward polar residues.

This is an uncharacterized protein from Schizosaccharomyces pombe (strain 972 / ATCC 24843) (Fission yeast).